The primary structure comprises 616 residues: Dihydroxy-acid dehydratase (616 aa).

Aspartate 81 lines the Mg(2+) pocket. Cysteine 122 is a binding site for [2Fe-2S] cluster. Residues aspartate 123 and lysine 124 each coordinate Mg(2+). The residue at position 124 (lysine 124) is an N6-carboxylysine. Cysteine 195 lines the [2Fe-2S] cluster pocket. A Mg(2+)-binding site is contributed by glutamate 491. The active-site Proton acceptor is the serine 517.

The protein belongs to the IlvD/Edd family. As to quaternary structure, homodimer. The cofactor is [2Fe-2S] cluster. It depends on Mg(2+) as a cofactor.

It catalyses the reaction (2R)-2,3-dihydroxy-3-methylbutanoate = 3-methyl-2-oxobutanoate + H2O. The enzyme catalyses (2R,3R)-2,3-dihydroxy-3-methylpentanoate = (S)-3-methyl-2-oxopentanoate + H2O. It functions in the pathway amino-acid biosynthesis; L-isoleucine biosynthesis; L-isoleucine from 2-oxobutanoate: step 3/4. It participates in amino-acid biosynthesis; L-valine biosynthesis; L-valine from pyruvate: step 3/4. Its function is as follows. Functions in the biosynthesis of branched-chain amino acids. Catalyzes the dehydration of (2R,3R)-2,3-dihydroxy-3-methylpentanoate (2,3-dihydroxy-3-methylvalerate) into 2-oxo-3-methylpentanoate (2-oxo-3-methylvalerate) and of (2R)-2,3-dihydroxy-3-methylbutanoate (2,3-dihydroxyisovalerate) into 2-oxo-3-methylbutanoate (2-oxoisovalerate), the penultimate precursor to L-isoleucine and L-valine, respectively. This is Dihydroxy-acid dehydratase from Escherichia coli O7:K1 (strain IAI39 / ExPEC).